Consider the following 600-residue polypeptide: Xylulose kinase (600 aa).

79 to 82 (WLEA) is a substrate binding site. At serine 244 the chain carries Phosphoserine. Residue aspartate 299 coordinates substrate. ATP is bound by residues glycine 358 and 505–509 (GASKN).

This sequence belongs to the FGGY kinase family.

It localises to the cytoplasm. The catalysed reaction is D-xylulose + ATP = D-xylulose 5-phosphate + ADP + H(+). In terms of biological role, xylulose kinase necessary for growth in culture media with D-xylulose as the solecarbon source. This is Xylulose kinase from Saccharomyces cerevisiae (strain ATCC 204508 / S288c) (Baker's yeast).